We begin with the raw amino-acid sequence, 712 residues long: Ribosomal RNA large subunit methyltransferase K/L (712 aa).

Residues 46–157 (GAYQALLHSR…RENMVVSLDL (112 aa)) enclose the THUMP domain.

This sequence belongs to the methyltransferase superfamily. RlmKL family.

The protein localises to the cytoplasm. It carries out the reaction guanosine(2445) in 23S rRNA + S-adenosyl-L-methionine = N(2)-methylguanosine(2445) in 23S rRNA + S-adenosyl-L-homocysteine + H(+). The catalysed reaction is guanosine(2069) in 23S rRNA + S-adenosyl-L-methionine = N(2)-methylguanosine(2069) in 23S rRNA + S-adenosyl-L-homocysteine + H(+). Specifically methylates the guanine in position 2445 (m2G2445) and the guanine in position 2069 (m7G2069) of 23S rRNA. The protein is Ribosomal RNA large subunit methyltransferase K/L of Actinobacillus pleuropneumoniae serotype 5b (strain L20).